The following is a 190-amino-acid chain: Elongation factor P (190 aa).

Belongs to the elongation factor P family.

The protein localises to the cytoplasm. It participates in protein biosynthesis; polypeptide chain elongation. In terms of biological role, involved in peptide bond synthesis. Stimulates efficient translation and peptide-bond synthesis on native or reconstituted 70S ribosomes in vitro. Probably functions indirectly by altering the affinity of the ribosome for aminoacyl-tRNA, thus increasing their reactivity as acceptors for peptidyl transferase. In Bartonella bacilliformis (strain ATCC 35685 / KC583 / Herrer 020/F12,63), this protein is Elongation factor P.